The following is a 442-amino-acid chain: Putative mannan endo-1,6-alpha-mannosidase C1198.07c (442 aa).

The N-terminal stretch at 1–19 (MRYLSFFFEFFFLFSFAFA) is a signal peptide. Residues 20 to 421 (FDFDVTSDDS…TPATKSDKGW (402 aa)) lie on the Lumenal side of the membrane. N75, N124, N193, N229, N254, N257, and N356 each carry an N-linked (GlcNAc...) asparagine glycan. The helical transmembrane segment at 422–442 (AGFLTFAFSFVFLLFSIWLYF) threads the bilayer.

This sequence belongs to the glycosyl hydrolase 76 family.

It localises to the endoplasmic reticulum membrane. It catalyses the reaction Random hydrolysis of (1-&gt;6)-alpha-D-mannosidic linkages in unbranched (1-&gt;6)-mannans.. The protein is Putative mannan endo-1,6-alpha-mannosidase C1198.07c of Schizosaccharomyces pombe (strain 972 / ATCC 24843) (Fission yeast).